The primary structure comprises 111 residues: uncharacterized protein (111 aa).

A helical transmembrane segment spans residues 27-47 (HLFHFPSISFFFFFFFFFFSF).

It localises to the membrane. This is an uncharacterized protein from Saccharomyces cerevisiae (strain ATCC 204508 / S288c) (Baker's yeast).